We begin with the raw amino-acid sequence, 178 residues long: MARLKSLYNDQYKQQIKDELGLENVMQVPKITKITLNMGVGGASQDKKLLEGAVADMTAIAGQKPVITKARKSVAGFKIREEWPIGCKVTLRGEQMYEFLDRLIAIAIPRIRDFRGFSPKAFDGRGNYSLGIKEQIVFPEVDYDKIDRLRGLDITITTSAQDDEQGRALLKAFGFPFK.

This sequence belongs to the universal ribosomal protein uL5 family. Part of the 50S ribosomal subunit; part of the 5S rRNA/L5/L18/L25 subcomplex. Contacts the 5S rRNA and the P site tRNA. Forms a bridge to the 30S subunit in the 70S ribosome.

This is one of the proteins that bind and probably mediate the attachment of the 5S RNA into the large ribosomal subunit, where it forms part of the central protuberance. In the 70S ribosome it contacts protein S13 of the 30S subunit (bridge B1b), connecting the 2 subunits; this bridge is implicated in subunit movement. Contacts the P site tRNA; the 5S rRNA and some of its associated proteins might help stabilize positioning of ribosome-bound tRNAs. The protein is Large ribosomal subunit protein uL5 of Psychrobacter sp. (strain PRwf-1).